The primary structure comprises 727 residues: NADH-ubiquinone oxidoreductase 75 kDa subunit, mitochondrial (727 aa).

Residues 1 to 23 constitute a mitochondrion transit peptide; sequence MLRIPVRKALVGLSKSPKGCVRT. The 2Fe-2S ferredoxin-type domain maps to 30–108; sequence NLIEVFVDGQ…GWNILTNSEK (79 aa). [2Fe-2S] cluster-binding residues include cysteine 64, cysteine 75, and cysteine 78. The residue at position 84 (lysine 84) is an N6-acetyllysine. Cysteine 92 contacts [2Fe-2S] cluster. The 40-residue stretch at 108 to 147 folds into the 4Fe-4S His(Cys)3-ligated-type domain; it reads KSKKAREGVMEFLLANHPLDCPICDQGGECDLQDQSMMFG. Positions 124, 128, 131, 137, 176, 179, 182, and 226 each coordinate [4Fe-4S] cluster. The region spanning 245–301 is the 4Fe-4S Mo/W bis-MGD-type domain; sequence TRKTESIDVMDAVGSNIVVSTRTGEVMRILPRMHEDINEXWISDKTRFAYDGLKRQR. Residues lysine 467, lysine 499, and lysine 709 each carry the N6-acetyllysine modification.

This sequence belongs to the complex I 75 kDa subunit family. Core subunit of respiratory chain NADH dehydrogenase (Complex I) which is composed of 45 different subunits. This is the largest subunit of complex I and it is a component of the iron-sulfur (IP) fragment of the enzyme. Complex I associates with ubiquinol-cytochrome reductase complex (Complex III) to form supercomplexes. Interacts with MDM2 and AKAP1. Requires [2Fe-2S] cluster as cofactor. [4Fe-4S] cluster serves as cofactor.

It is found in the mitochondrion inner membrane. It catalyses the reaction a ubiquinone + NADH + 5 H(+)(in) = a ubiquinol + NAD(+) + 4 H(+)(out). In terms of biological role, core subunit of the mitochondrial membrane respiratory chain NADH dehydrogenase (Complex I) which catalyzes electron transfer from NADH through the respiratory chain, using ubiquinone as an electron acceptor. Essential for catalysing the entry and efficient transfer of electrons within complex I. Plays a key role in the assembly and stability of complex I and participates in the association of complex I with ubiquinol-cytochrome reductase complex (Complex III) to form supercomplexes. The protein is NADH-ubiquinone oxidoreductase 75 kDa subunit, mitochondrial (NDUFS1) of Gorilla gorilla gorilla (Western lowland gorilla).